The sequence spans 877 residues: Alanine--tRNA ligase (877 aa).

Positions 567, 571, 669, and 673 each coordinate Zn(2+).

It belongs to the class-II aminoacyl-tRNA synthetase family. It depends on Zn(2+) as a cofactor.

Its subcellular location is the cytoplasm. The enzyme catalyses tRNA(Ala) + L-alanine + ATP = L-alanyl-tRNA(Ala) + AMP + diphosphate. Its function is as follows. Catalyzes the attachment of alanine to tRNA(Ala) in a two-step reaction: alanine is first activated by ATP to form Ala-AMP and then transferred to the acceptor end of tRNA(Ala). Also edits incorrectly charged Ser-tRNA(Ala) and Gly-tRNA(Ala) via its editing domain. In Rickettsia rickettsii (strain Iowa), this protein is Alanine--tRNA ligase.